A 152-amino-acid polypeptide reads, in one-letter code: Superoxide dismutase [Cu-Zn] (152 aa).

Positions 45, 47, and 62 each coordinate Cu cation. Residues cysteine 56 and cysteine 145 are joined by a disulfide bond. Zn(2+) contacts are provided by histidine 62, histidine 70, histidine 79, and aspartate 82. Cu cation is bound at residue histidine 119.

The protein belongs to the Cu-Zn superoxide dismutase family. Homodimer. Cu cation serves as cofactor. Zn(2+) is required as a cofactor.

It is found in the cytoplasm. The enzyme catalyses 2 superoxide + 2 H(+) = H2O2 + O2. Functionally, destroys radicals which are normally produced within the cells and which are toxic to biological systems. This Paulownia kawakamii (Dragon tree) protein is Superoxide dismutase [Cu-Zn] (SODCC).